The following is a 523-amino-acid chain: MLVELAITLLVIALFIHLRPTLSAKSKSLRHLPNPPSPKPRLPFVGHLHLLDKPLLHYSLIDLSKRYGPLYSLYFGSMPTVVASTPELFKLFLQTHEASSFNTRFQTSAIRRLTYDNSVAMVPFGPYWKFIRKLIMNDLLNATTVNKLRPLRSQEIRKVLRVMAQSAESQVPLNVTEELLKWTNSTISRMMLGEAEEIRDIARDVLKIFGEYSLTDFIWPLKKLKVGQYEKRIDDIFNRFDPVIERVIKKRQEIRKKRKERNGEIEEGEQSVVFLDTLLDFAEDETMEIKITKEQIKGLVVDFFSAGTDSTAVATDWALSELINNPRVFQKAREEIDAVVGKDRLVDEADVQNLPYIRSIVKETFRMHPPLPVVKRKCVQECEVDGYVIPEGALILFNVWAVGRDPKYWDRPTEFRPERFLENVGEGDQAVDLRGQHFQLLPFGSGRRMCPGVNLATAGMATLLASVIQCFDLSVVGPQGKILKGNDAKVSMEERAGLTVPRAHNLICVPVARSSAVPKLFSS.

The chain crosses the membrane as a helical span at residues 2–22 (LVELAITLLVIALFIHLRPTL). C450 serves as a coordination point for heme.

This sequence belongs to the cytochrome P450 family. Heme is required as a cofactor.

It is found in the microsome membrane. The catalysed reaction is (2S)-liquiritigenin + reduced [NADPH--hemoprotein reductase] + O2 = (2R,3S)-2,4',7-trihydroxyisoflavanone + oxidized [NADPH--hemoprotein reductase] + H2O + H(+). The enzyme catalyses (2S)-naringenin + reduced [NADPH--hemoprotein reductase] + O2 = 2-hydroxy-2,3-dihydrogenistein + oxidized [NADPH--hemoprotein reductase] + H2O + H(+). Functionally, 2-hydroxyisoflavanone synthase, which catalyzes the hydroxylation associated with 1,2-aryl migration of flavanones. Converts liquiritigenin and naringenin into highly unstable precursors of the isoflavones daidzein and genistein. Acts only on substrates with (2S)-chirality. The protein is 2-hydroxyisoflavanone synthase (CYP93C2) of Glycyrrhiza echinata (Licorice).